Here is a 474-residue protein sequence, read N- to C-terminus: Stabilizer of axonemal microtubules 1 (474 aa).

Mn regions lie at residues lysine 30–isoleucine 64, proline 65–glutamate 97, asparagine 98–asparagine 131, lysine 132–valine 165, arginine 166–isoleucine 199, proline 200–isoleucine 232, proline 233–methionine 266, proline 267–aspartate 299, serine 300–glycine 332, arginine 333–glutamate 366, proline 367–valine 400, and proline 401–glutamate 434. The disordered stretch occupies residues proline 318–methionine 350. The disordered stretch occupies residues lysine 444 to alanine 474. Over residues glutamine 448–leucine 457 the composition is skewed to polar residues.

The protein belongs to the FAM154 family. As to quaternary structure, associates with microtubules via the Mn regions.

It localises to the cytoplasm. Its subcellular location is the cytoskeleton. It is found in the microtubule organizing center. The protein localises to the centrosome. The protein resides in the centriole. It localises to the cilium basal body. Its subcellular location is the cilium axoneme. It is found in the flagellum axoneme. In terms of biological role, may play a role in the regulation of cilium length. Stabilizes microtubules at low temperature. The polypeptide is Stabilizer of axonemal microtubules 1 (SAXO1) (Macaca fascicularis (Crab-eating macaque)).